Here is a 568-residue protein sequence, read N- to C-terminus: Phenylalanine--tRNA ligase beta subunit (568 aa).

Residues 278 to 353 (LTPKSFEVEL…IAYGYNEIEP (76 aa)) enclose the B5 domain. Mg(2+)-binding residues include Asp-331, Asp-337, Glu-340, and Asp-341.

This sequence belongs to the phenylalanyl-tRNA synthetase beta subunit family. Type 2 subfamily. Tetramer of two alpha and two beta subunits. It depends on Mg(2+) as a cofactor.

It is found in the cytoplasm. It catalyses the reaction tRNA(Phe) + L-phenylalanine + ATP = L-phenylalanyl-tRNA(Phe) + AMP + diphosphate + H(+). In Thermococcus gammatolerans (strain DSM 15229 / JCM 11827 / EJ3), this protein is Phenylalanine--tRNA ligase beta subunit.